We begin with the raw amino-acid sequence, 434 residues long: Beta-enolase (434 aa).

Ala-2 carries the N-acetylalanine modification. Phosphothreonine is present on Thr-72. 2 positions are modified to phosphoserine: Ser-83 and Ser-157. Positions 158 and 167 each coordinate substrate. The residue at position 176 (Ser-176) is a Phosphoserine. At Thr-205 the chain carries Phosphothreonine. The active-site Proton donor is the Glu-210. At Thr-229 the chain carries Phosphothreonine. Phosphotyrosine is present on Tyr-236. Asp-245 is a Mg(2+) binding site. A Phosphoserine modification is found at Ser-263. Substrate-binding residues include Glu-293 and Asp-318. Glu-293 and Asp-318 together coordinate Mg(2+). Lys-343 (proton acceptor) is an active-site residue. Substrate contacts are provided by residues 370-373 (SHRS) and Lys-394.

The protein belongs to the enolase family. As to quaternary structure, mammalian enolase is composed of 3 isozyme subunits, alpha, beta and gamma, which can form homodimers or heterodimers which are cell-type and development-specific. Interacts with PNKD. Requires Mg(2+) as cofactor.

It is found in the cytoplasm. The enzyme catalyses (2R)-2-phosphoglycerate = phosphoenolpyruvate + H2O. Its pathway is carbohydrate degradation; glycolysis; pyruvate from D-glyceraldehyde 3-phosphate: step 4/5. Glycolytic enzyme that catalyzes the conversion of 2-phosphoglycerate to phosphoenolpyruvate. Appears to have a function in striated muscle development and regeneration. This chain is Beta-enolase (ENO3), found in Sus scrofa (Pig).